A 313-amino-acid polypeptide reads, in one-letter code: tRNA dimethylallyltransferase (313 aa).

Position 9–16 (9–16 (GPTAVGKT)) interacts with ATP. Residue 11 to 16 (TAVGKT) participates in substrate binding. An interaction with substrate tRNA region spans residues 34–37 (DSMQ).

This sequence belongs to the IPP transferase family. Monomer. The cofactor is Mg(2+).

The catalysed reaction is adenosine(37) in tRNA + dimethylallyl diphosphate = N(6)-dimethylallyladenosine(37) in tRNA + diphosphate. In terms of biological role, catalyzes the transfer of a dimethylallyl group onto the adenine at position 37 in tRNAs that read codons beginning with uridine, leading to the formation of N6-(dimethylallyl)adenosine (i(6)A). This chain is tRNA dimethylallyltransferase, found in Lachnoclostridium phytofermentans (strain ATCC 700394 / DSM 18823 / ISDg) (Clostridium phytofermentans).